A 208-amino-acid chain; its full sequence is ATP synthase subunit b (208 aa).

The first 27 residues, 1–27, serve as a signal peptide directing secretion; the sequence is MVKAKKLVFKWSLLVFSFFTLSLFLVS. Cys28 is lipidated: N-palmitoyl cysteine. Cys28 carries the S-diacylglycerol cysteine lipid modification. Residues 49-69 form a helical membrane-spanning segment; the sequence is WVFITHLLAFFILLTLMIFLF.

The protein belongs to the ATPase B chain family. As to quaternary structure, F-type ATPases have 2 components, F(1) - the catalytic core - and F(0) - the membrane proton channel. F(1) has five subunits: alpha(3), beta(3), gamma(1), delta(1), epsilon(1). F(0) has three main subunits: a(1), b(2) and c(10-14). The alpha and beta chains form an alternating ring which encloses part of the gamma chain. F(1) is attached to F(0) by a central stalk formed by the gamma and epsilon chains, while a peripheral stalk is formed by the delta and b chains.

It is found in the cell membrane. Its function is as follows. F(1)F(0) ATP synthase produces ATP from ADP in the presence of a proton or sodium gradient. F-type ATPases consist of two structural domains, F(1) containing the extramembraneous catalytic core and F(0) containing the membrane proton channel, linked together by a central stalk and a peripheral stalk. During catalysis, ATP synthesis in the catalytic domain of F(1) is coupled via a rotary mechanism of the central stalk subunits to proton translocation. Functionally, component of the F(0) channel, it forms part of the peripheral stalk, linking F(1) to F(0). This is ATP synthase subunit b from Mycoplasma genitalium (strain ATCC 33530 / DSM 19775 / NCTC 10195 / G37) (Mycoplasmoides genitalium).